A 201-amino-acid polypeptide reads, in one-letter code: 3-isopropylmalate dehydratase small subunit 1 (201 aa).

This sequence belongs to the LeuD family. LeuD type 1 subfamily. In terms of assembly, heterodimer of LeuC and LeuD.

The enzyme catalyses (2R,3S)-3-isopropylmalate = (2S)-2-isopropylmalate. It functions in the pathway amino-acid biosynthesis; L-leucine biosynthesis; L-leucine from 3-methyl-2-oxobutanoate: step 2/4. Catalyzes the isomerization between 2-isopropylmalate and 3-isopropylmalate, via the formation of 2-isopropylmaleate. In Salmonella typhimurium (strain LT2 / SGSC1412 / ATCC 700720), this protein is 3-isopropylmalate dehydratase small subunit 1.